A 99-amino-acid polypeptide reads, in one-letter code: Aspartyl/glutamyl-tRNA(Asn/Gln) amidotransferase subunit C (99 aa).

This sequence belongs to the GatC family. Heterotrimer of A, B and C subunits.

It catalyses the reaction L-glutamyl-tRNA(Gln) + L-glutamine + ATP + H2O = L-glutaminyl-tRNA(Gln) + L-glutamate + ADP + phosphate + H(+). The catalysed reaction is L-aspartyl-tRNA(Asn) + L-glutamine + ATP + H2O = L-asparaginyl-tRNA(Asn) + L-glutamate + ADP + phosphate + 2 H(+). Allows the formation of correctly charged Asn-tRNA(Asn) or Gln-tRNA(Gln) through the transamidation of misacylated Asp-tRNA(Asn) or Glu-tRNA(Gln) in organisms which lack either or both of asparaginyl-tRNA or glutaminyl-tRNA synthetases. The reaction takes place in the presence of glutamine and ATP through an activated phospho-Asp-tRNA(Asn) or phospho-Glu-tRNA(Gln). The chain is Aspartyl/glutamyl-tRNA(Asn/Gln) amidotransferase subunit C from Corynebacterium diphtheriae (strain ATCC 700971 / NCTC 13129 / Biotype gravis).